Reading from the N-terminus, the 204-residue chain is Somatotropin (204 aa).

An N-terminal signal peptide occupies residues 1–17 (MDRAVLLLSVLSLGVSS). Q18 bears the Pyrrolidone carboxylic acid mark. Residue H35 participates in Zn(2+) binding. C69 and C177 are oxidised to a cystine. A Zn(2+)-binding site is contributed by E186. C194 and C202 are joined by a disulfide.

The protein belongs to the somatotropin/prolactin family.

It is found in the secreted. Functionally, growth hormone plays an important role in growth control and is involved in the regulation of several anabolic processes. Implicated as an osmoregulatory substance important for seawater adaptation. The polypeptide is Somatotropin (gh) (Morone saxatilis (Striped bass)).